The sequence spans 215 residues: UPF0502 protein CKO_01995 (215 aa).

This sequence belongs to the UPF0502 family.

This Citrobacter koseri (strain ATCC BAA-895 / CDC 4225-83 / SGSC4696) protein is UPF0502 protein CKO_01995.